The sequence spans 408 residues: Leucine aminopeptidase 1 (408 aa).

The N-terminal stretch at 1–16 (MKVSSAIALLLPVVAA) is a signal peptide. The propeptide occupies 17–89 (RFVDSAFEQD…SAQSATTGPA (73 aa)). Asn-95, Asn-108, and Asn-182 each carry an N-linked (GlcNAc...) asparagine glycan. His-190, Asp-209, Glu-248, and Asp-275 together coordinate Zn(2+). Residues Cys-324 and Cys-328 are joined by a disulfide bond. His-357 contributes to the Zn(2+) binding site.

The protein belongs to the peptidase M28 family. M28E subfamily. As to quaternary structure, monomer. It depends on Zn(2+) as a cofactor.

The protein resides in the secreted. Functionally, extracellular aminopeptidase that allows assimilation of proteinaceous substrates. The chain is Leucine aminopeptidase 1 (LAP1) from Grosmannia clavigera (strain kw1407 / UAMH 11150) (Blue stain fungus).